We begin with the raw amino-acid sequence, 303 residues long: uncharacterized protein (303 aa).

It localises to the cytoplasm. This is an uncharacterized protein from Saccharomyces cerevisiae (strain ATCC 204508 / S288c) (Baker's yeast).